The primary structure comprises 181 residues: UPF0398 protein lin2003 (181 aa).

This sequence belongs to the UPF0398 family.

This Listeria innocua serovar 6a (strain ATCC BAA-680 / CLIP 11262) protein is UPF0398 protein lin2003.